The following is a 225-amino-acid chain: Protein ERP3 (225 aa).

Residues 1–23 form the signal peptide; sequence MSNLCVLFFQFFFLAQFFAEASP. The Lumenal portion of the chain corresponds to 24-195; the sequence is LTFELNKGRK…STEHRIVMFS (172 aa). A GOLD domain is found at 33 to 172; it reads KECLYTLTPE…LHVLERNIQY (140 aa). Basic residues predominate over residues 129-138; that stretch reads ERRKARKAQR. Positions 129 to 149 are disordered; it reads ERRKARKAQRNLRDSKTDPLQ. A helical transmembrane segment spans residues 196 to 216; it reads IYGILLIIGMSCAQIAILEFI. The Cytoplasmic portion of the chain corresponds to 217 to 225; sequence FRESRKHNV.

Belongs to the EMP24/GP25L family.

It is found in the endoplasmic reticulum membrane. Functionally, involved in vesicular protein trafficking. This chain is Protein ERP3 (ERP3), found in Saccharomyces cerevisiae (strain ATCC 204508 / S288c) (Baker's yeast).